Consider the following 808-residue polypeptide: Ribosome biogenesis protein BOP1 homolog (808 aa).

The tract at residues 1-56 (MTSPKGKPSPKRSAPAPTTAALTPRTEERTEGATSSASASASSHISSSFDSPRDDT) is disordered. Composition is skewed to low complexity over residues 12 to 24 (RSAP…ALTP) and 33 to 50 (ATSS…SSFD). WD repeat units lie at residues 430–469 (GHTA…LMKR), 640–680 (KFSE…RRFK), 682–720 (SGGV…KPYK), 724–766 (SHRG…DYNK), and 777–808 (KHQR…AWTE).

Belongs to the WD repeat BOP1/ERB1 family.

The protein localises to the nucleus. Its subcellular location is the nucleolus. The protein resides in the nucleoplasm. In terms of biological role, required for maturation of ribosomal RNAs and formation of the large ribosomal subunit. The polypeptide is Ribosome biogenesis protein BOP1 homolog (Leishmania infantum).